The following is an 83-amino-acid chain: Large ribosomal subunit protein bL27 (83 aa).

The segment at 1–25 (MAHKKGQGASRNGRDSESKRLGLKV) is disordered.

This sequence belongs to the bacterial ribosomal protein bL27 family.

The polypeptide is Large ribosomal subunit protein bL27 (Chlamydia trachomatis serovar L2 (strain ATCC VR-902B / DSM 19102 / 434/Bu)).